A 974-amino-acid chain; its full sequence is Villin-4 (974 aa).

Gelsolin-like repeat units follow at residues 29 to 79 (FIPT…DEAG), 150 to 190 (VHVK…QERA), 262 to 305 (GQAN…DDRK), 394 to 451 (LQVW…EERG), 532 to 572 (MQAI…TDQE), and 634 to 675 (LKVT…KNKL). The interval 738–783 (VKNGGTPVADKPKRRTPASYGGRASVPDKSQQRSRSMSFSPDRVRV) is disordered. Residues S777 and S787 each carry the phosphoserine modification. Disordered stretches follow at residues 801–833 (NARN…APKS) and 845–930 (KIPP…PVSD). The segment covering 824 to 833 (SSKFAPAPKS) has biased composition (low complexity). Positions 872–887 (NSKEQEEKKENDKEEG) are enriched in basic and acidic residues. Polar residues predominate over residues 888-898 (SMSSRIESLTI). Position 890 is a phosphoserine (S890). Positions 909–974 (EEDLPAHPYD…NKFKMAVQLF (66 aa)) constitute an HP domain. Basic and acidic residues predominate over residues 912–921 (LPAHPYDRLK).

This sequence belongs to the villin/gelsolin family. As to expression, preferentially expressed in vegetative tissues. Detected in the whole seedling, hypocotyl, cotyledon, primary root, roots hair cells and trichomes. Expressed in flowers but not in the silique.

The protein localises to the cytoplasm. The protein resides in the cytoskeleton. Functionally, binds actin and actin filament bundles in a Ca(2+)-insensitive manner, but caps the barbed end of actin filaments and is able to sever them in a calcium-dependent manner. Involved in root hair growth through regulating actin organization in a Ca(2+)-dependent manner. In Arabidopsis thaliana (Mouse-ear cress), this protein is Villin-4.